The primary structure comprises 439 residues: Casein kinase I homolog 3 (439 aa).

The Protein kinase domain occupies 15–286; sequence YRVGKKIGEG…LRSLFDSLLL (272 aa). Residues 21–29 and K44 each bind ATP; that span reads IGEGSFGML. D134 acts as the Proton acceptor in catalysis. Positions 366-426 are disordered; sequence DGIPGKAASP…PSKEKSRKKF (61 aa). Low complexity predominate over residues 372-413; sequence AASPQVQQQQQTSSAQQQQPQRVEQPAPQTTQPTQVDTQQAA.

Belongs to the protein kinase superfamily. CK1 Ser/Thr protein kinase family. Casein kinase I subfamily.

Its subcellular location is the cytoplasm. The catalysed reaction is L-seryl-[protein] + ATP = O-phospho-L-seryl-[protein] + ADP + H(+). The enzyme catalyses L-threonyl-[protein] + ATP = O-phospho-L-threonyl-[protein] + ADP + H(+). Its function is as follows. Casein kinases are operationally defined by their preferential utilization of acidic proteins such as caseins as substrates. The protein is Casein kinase I homolog 3 (cki3) of Schizosaccharomyces pombe (strain 972 / ATCC 24843) (Fission yeast).